A 369-amino-acid polypeptide reads, in one-letter code: tRNA(Met) cytidine acetate ligase (369 aa).

ATP is bound by residues 7-20, Gly96, Asn152, and Arg175; that span reads VAEF…HKYL.

The protein belongs to the TmcAL family.

Its subcellular location is the cytoplasm. It carries out the reaction cytidine(34) in elongator tRNA(Met) + acetate + ATP = N(4)-acetylcytidine(34) in elongator tRNA(Met) + AMP + diphosphate. Its function is as follows. Catalyzes the formation of N(4)-acetylcytidine (ac(4)C) at the wobble position of elongator tRNA(Met), using acetate and ATP as substrates. First activates an acetate ion to form acetyladenylate (Ac-AMP) and then transfers the acetyl group to tRNA to form ac(4)C34. The protein is tRNA(Met) cytidine acetate ligase of Streptococcus agalactiae serotype III (strain NEM316).